The chain runs to 1785 residues: BCL-6 corepressor-like protein 1 (1785 aa).

Disordered stretches follow at residues 65–101, 113–137, and 343–368; these read VGSG…KMDY, VPLS…NSRA, and ASTP…GPPS. Over residues 83–97 the composition is skewed to basic and acidic residues; that stretch reads KLGHKSEDKPDDPQP. Ser-496 is modified (phosphoserine). 2 stretches are compositionally biased toward polar residues: residues 527-539 and 586-600; these read PCTS…TTQP and GTEQ…TFSP. Disordered regions lie at residues 527 to 550 and 562 to 646; these read PCTS…PLAD and PTPQ…PMPV. 2 positions are modified to phosphoserine: Ser-599 and Ser-613. Residue Lys-747 forms a Glycyl lysine isopeptide (Lys-Gly) (interchain with G-Cter in SUMO2) linkage. Disordered stretches follow at residues 753–781, 876–901, and 937–977; these read IIDQ…QPST, SSSE…EQDP, and VQPS…LKLA. Phosphoserine is present on residues Ser-1029 and Ser-1033. Residue Lys-1092 forms a Glycyl lysine isopeptide (Lys-Gly) (interchain with G-Cter in SUMO2) linkage. Disordered stretches follow at residues 1107 to 1293 and 1312 to 1487; these read PDDV…QGRR and WDTN…PEAR. Residue Ser-1162 is modified to Phosphoserine. The segment covering 1176–1185 has biased composition (basic residues); sequence VRGKHKHRKP. Residues 1195-1213 are compositionally biased toward basic and acidic residues; sequence KRADSHEEGSLEKKAKSSF. The segment covering 1222-1234 has biased composition (polar residues); it reads STRTRSQSGSICS. Basic and acidic residues predominate over residues 1271–1284; the sequence is TQRDTQYRSHHAQD. Residues 1314–1324 show a composition bias toward acidic residues; that stretch reads TNEEEEEEEEE. A Nuclear localization signal motif is present at residues 1328-1336; sequence KRKKRRRQK. Residues 1328–1339 show a composition bias toward basic residues; sequence KRKKRRRQKSRK. The span at 1352–1363 shows a compositional bias: basic and acidic residues; the sequence is EQRRKGRADLKA. Positions 1440 to 1449 are enriched in polar residues; the sequence is WSQQKTRSPK. The segment covering 1461 to 1480 has biased composition (low complexity); it reads TPSKSRSASSEEASESPTAR. The residue at position 1476 (Ser-1476) is a Phosphoserine. ANK repeat units lie at residues 1529–1558, 1562–1591, and 1595–1623; these read AGYT…NVNC, DGTR…DPTL, and SGQT…QGRA. The segment at 1668-1785 is PCGF Ub-like fold domain (PUFD); required for the interaction with the KDM2B-SKP1 heterodimeric complex; sequence DDFMFELSDK…SEVEFQSCNS (118 aa).

It belongs to the BCOR family. Interacts with PCGF1, forming heterodimers. The PCGF1-BCORL1 heterodimeric complex interacts with the KDM2B-SKP1 heterodimeric complex to form a homotetrameric polycomb repression complex 1 (PRC1.1). Interacts with SKP1. Interacts with CTBP1, HDAC4, HDAC5 and HDAC7. Detected in testis and prostate. Detected at lower levels in peripheral blood leukocytes and spleen. Mainly expressed in the spermatogonia and primary spermatocytes.

The protein resides in the nucleus. Its function is as follows. Transcriptional corepressor. May specifically inhibit gene expression when recruited to promoter regions by sequence-specific DNA-binding proteins such as BCL6. This repression may be mediated at least in part by histone deacetylase activities which can associate with this corepressor. The sequence is that of BCL-6 corepressor-like protein 1 from Homo sapiens (Human).